The chain runs to 102 residues: Large ribosomal subunit protein eL31 (102 aa).

The protein belongs to the eukaryotic ribosomal protein eL31 family.

The polypeptide is Large ribosomal subunit protein eL31 (Staphylothermus marinus (strain ATCC 43588 / DSM 3639 / JCM 9404 / F1)).